The primary structure comprises 485 residues: Ribosomal protein uS12 methylthiotransferase RimO (485 aa).

In terms of domain architecture, MTTase N-terminal spans 37 to 147; that stretch reads SRIGFVSLGC…VVEQVHEHLP (111 aa). [4Fe-4S] cluster contacts are provided by Cys-46, Cys-82, Cys-111, Cys-179, Cys-183, and Cys-186. The region spanning 165–402 is the Radical SAM core domain; it reads LTPRHYAYLK…MEVQGEISAA (238 aa). Residues 405-471 enclose the TRAM domain; that stretch reads KARIGNEYQV…EHDVWAVLSE (67 aa).

It belongs to the methylthiotransferase family. RimO subfamily. It depends on [4Fe-4S] cluster as a cofactor.

It localises to the cytoplasm. It carries out the reaction L-aspartate(89)-[ribosomal protein uS12]-hydrogen + (sulfur carrier)-SH + AH2 + 2 S-adenosyl-L-methionine = 3-methylsulfanyl-L-aspartate(89)-[ribosomal protein uS12]-hydrogen + (sulfur carrier)-H + 5'-deoxyadenosine + L-methionine + A + S-adenosyl-L-homocysteine + 2 H(+). Its function is as follows. Catalyzes the methylthiolation of an aspartic acid residue of ribosomal protein uS12. This chain is Ribosomal protein uS12 methylthiotransferase RimO, found in Alteromonas mediterranea (strain DSM 17117 / CIP 110805 / LMG 28347 / Deep ecotype).